We begin with the raw amino-acid sequence, 103 residues long: Large ribosomal subunit protein eL30 (103 aa).

This sequence belongs to the eukaryotic ribosomal protein eL30 family.

This chain is Large ribosomal subunit protein eL30, found in Methanosarcina mazei (strain ATCC BAA-159 / DSM 3647 / Goe1 / Go1 / JCM 11833 / OCM 88) (Methanosarcina frisia).